Reading from the N-terminus, the 300-residue chain is Enoyl-CoA hydratase domain-containing protein 3, mitochondrial (300 aa).

The N-terminal 66 residues, 1–66 (MALVAGLRAF…RNIVLSNPRR (66 aa)), are a transit peptide targeting the mitochondrion. The disordered stretch occupies residues 32–54 (SPGSARPAGPESEPRLTSTRQQD). Lys110 carries the N6-succinyllysine modification.

It belongs to the enoyl-CoA hydratase/isomerase family.

It localises to the mitochondrion. Its function is as follows. May play a role in fatty acid biosynthesis and insulin sensitivity. In Rattus norvegicus (Rat), this protein is Enoyl-CoA hydratase domain-containing protein 3, mitochondrial.